The following is a 432-amino-acid chain: Serine/threonine-protein kinase Sgk1 (432 aa).

The segment at 67-93 (PELMNANPSPPPSPSQQINLGPSSNPH) is disordered. Positions 82–92 (QQINLGPSSNP) are enriched in polar residues. The 258-residue stretch at 99–356 (FHFLKVIGKG…FTEIKNHIFF (258 aa)) folds into the Protein kinase domain. Residues 105-113 (IGKGSFGKV) and Lys128 contribute to the ATP site. Asp223 (proton acceptor) is an active-site residue. The region spanning 357–432 (SPINWDDLIN…SYAPPVDSFL (76 aa)) is the AGC-kinase C-terminal domain.

This sequence belongs to the protein kinase superfamily. AGC Ser/Thr protein kinase family.

It localises to the cytoplasm. It is found in the nucleus. The protein resides in the endoplasmic reticulum. It carries out the reaction L-seryl-[protein] + ATP = O-phospho-L-seryl-[protein] + ADP + H(+). It catalyses the reaction L-threonyl-[protein] + ATP = O-phospho-L-threonyl-[protein] + ADP + H(+). Its function is as follows. Protein kinase that may play an important role in cellular stress response. May be involved in the regulation of processes such as cell survival, neuronal excitability and renal sodium excretion. This chain is Serine/threonine-protein kinase Sgk1 (SGK1), found in Gallus gallus (Chicken).